A 370-amino-acid polypeptide reads, in one-letter code: tRNA 2-selenouridine synthase (370 aa).

A Rhodanese domain is found at 12–136; that stretch reads FLDDVPMMDM…MRTFLLETTQ (125 aa). The S-selanylcysteine intermediate role is filled by cysteine 95.

This sequence belongs to the SelU family. Monomer.

The catalysed reaction is 5-methylaminomethyl-2-thiouridine(34) in tRNA + selenophosphate + (2E)-geranyl diphosphate + H2O + H(+) = 5-methylaminomethyl-2-selenouridine(34) in tRNA + (2E)-thiogeraniol + phosphate + diphosphate. It catalyses the reaction 5-methylaminomethyl-2-thiouridine(34) in tRNA + (2E)-geranyl diphosphate = 5-methylaminomethyl-S-(2E)-geranyl-thiouridine(34) in tRNA + diphosphate. The enzyme catalyses 5-methylaminomethyl-S-(2E)-geranyl-thiouridine(34) in tRNA + selenophosphate + H(+) = 5-methylaminomethyl-2-(Se-phospho)selenouridine(34) in tRNA + (2E)-thiogeraniol. It carries out the reaction 5-methylaminomethyl-2-(Se-phospho)selenouridine(34) in tRNA + H2O = 5-methylaminomethyl-2-selenouridine(34) in tRNA + phosphate. Its function is as follows. Involved in the post-transcriptional modification of the uridine at the wobble position (U34) of tRNA(Lys), tRNA(Glu) and tRNA(Gln). Catalyzes the conversion of 2-thiouridine (S2U-RNA) to 2-selenouridine (Se2U-RNA). Acts in a two-step process involving geranylation of 2-thiouridine (S2U) to S-geranyl-2-thiouridine (geS2U) and subsequent selenation of the latter derivative to 2-selenouridine (Se2U) in the tRNA chain. This Pseudomonas putida (strain ATCC 47054 / DSM 6125 / CFBP 8728 / NCIMB 11950 / KT2440) protein is tRNA 2-selenouridine synthase.